The sequence spans 344 residues: Putative 2-hydroxyacid dehydrogenase YoaD (344 aa).

Asp193 is a binding site for NAD(+). Residue Arg251 is part of the active site. Asp275 serves as a coordination point for NAD(+). Residue Glu280 is part of the active site. The Proton donor role is filled by His300.

The protein belongs to the D-isomer specific 2-hydroxyacid dehydrogenase family.

In Bacillus subtilis (strain 168), this protein is Putative 2-hydroxyacid dehydrogenase YoaD (yoaD).